Here is a 319-residue protein sequence, read N- to C-terminus: MIQRNINRVALIGAGSVGSSYAFALLNQSITEELVIIDVNEDKAMGDAMDLNHGKIFAPNPTKTWYGNYDDCKEADIVCICAGANQKPGETRLDLVEKNLKIFKSLVDQVMASGFDGIFLIATNPVDILTYATWKFSGLPKERVIGSGTILDSGRFRFLLGEYFDIAPANVHAHIIGEHGDTELPVWSHADIGGVPVEELITRNPEYKMEDLDQLFVNVRDAAYHIIKKKGATYYGIAMGLARITKAILNNENSVLTVSTYLDGEYGEKDVYIGVPAVVNRTGIREILELTLSETEQKQFTHSSTVLKEILNPHFKEAR.

NAD(+)-binding positions include valine 17, aspartate 38, lysine 43, tyrosine 69, and glycine 83–alanine 84. Substrate is bound by residues glutamine 86 and arginine 92. Residues serine 105, alanine 122–asparagine 124, and serine 147 each bind NAD(+). Position 124–127 (asparagine 124–aspartate 127) interacts with substrate. Residue aspartate 152–arginine 155 participates in substrate binding. 2 residues coordinate beta-D-fructose 1,6-bisphosphate: arginine 157 and histidine 172. Histidine 179 functions as the Proton acceptor in the catalytic mechanism. A Phosphotyrosine modification is found at tyrosine 224. Substrate is bound at residue threonine 233.

The protein belongs to the LDH/MDH superfamily. LDH family. In terms of assembly, homotetramer.

The protein localises to the cytoplasm. It carries out the reaction (S)-lactate + NAD(+) = pyruvate + NADH + H(+). The protein operates within fermentation; pyruvate fermentation to lactate; (S)-lactate from pyruvate: step 1/1. Its activity is regulated as follows. Allosterically activated by fructose 1,6-bisphosphate (FBP). Functionally, catalyzes the conversion of lactate to pyruvate. This Peribacillus psychrosaccharolyticus (Bacillus psychrosaccharolyticus) protein is L-lactate dehydrogenase 2.